The sequence spans 529 residues: Peptide chain release factor 3 (529 aa).

Residues alanine 11 to methionine 280 enclose the tr-type G domain. GTP contacts are provided by residues serine 20–threonine 27, aspartate 88–histidine 92, and asparagine 142–aspartate 145.

It belongs to the TRAFAC class translation factor GTPase superfamily. Classic translation factor GTPase family. PrfC subfamily.

It localises to the cytoplasm. In terms of biological role, increases the formation of ribosomal termination complexes and stimulates activities of RF-1 and RF-2. It binds guanine nucleotides and has strong preference for UGA stop codons. It may interact directly with the ribosome. The stimulation of RF-1 and RF-2 is significantly reduced by GTP and GDP, but not by GMP. This is Peptide chain release factor 3 from Edwardsiella ictaluri (strain 93-146).